The sequence spans 419 residues: Serine--tRNA ligase (419 aa).

226 to 228 is a binding site for L-serine; it reads TSE. Residues 257-259 and Val-273 each bind ATP; that span reads RRE. Glu-280 lines the L-serine pocket. 344 to 347 is an ATP binding site; it reads ELTS. Thr-379 contributes to the L-serine binding site.

This sequence belongs to the class-II aminoacyl-tRNA synthetase family. Type-1 seryl-tRNA synthetase subfamily. In terms of assembly, homodimer. The tRNA molecule binds across the dimer.

It is found in the cytoplasm. The catalysed reaction is tRNA(Ser) + L-serine + ATP = L-seryl-tRNA(Ser) + AMP + diphosphate + H(+). The enzyme catalyses tRNA(Sec) + L-serine + ATP = L-seryl-tRNA(Sec) + AMP + diphosphate + H(+). It participates in aminoacyl-tRNA biosynthesis; selenocysteinyl-tRNA(Sec) biosynthesis; L-seryl-tRNA(Sec) from L-serine and tRNA(Sec): step 1/1. Functionally, catalyzes the attachment of serine to tRNA(Ser). Is also able to aminoacylate tRNA(Sec) with serine, to form the misacylated tRNA L-seryl-tRNA(Sec), which will be further converted into selenocysteinyl-tRNA(Sec). This is Serine--tRNA ligase from Mycobacterium tuberculosis (strain CDC 1551 / Oshkosh).